The sequence spans 122 residues: Large ribosomal subunit protein uL14c (122 aa).

Belongs to the universal ribosomal protein uL14 family. As to quaternary structure, part of the 50S ribosomal subunit.

The protein localises to the plastid. Its subcellular location is the chloroplast. Functionally, binds to 23S rRNA. This Amborella trichopoda protein is Large ribosomal subunit protein uL14c.